The sequence spans 313 residues: Ribosomal RNA small subunit methyltransferase H (313 aa).

S-adenosyl-L-methionine contacts are provided by residues 35–37 (GGH), Asp-55, Phe-80, Asp-102, and Gln-109.

The protein belongs to the methyltransferase superfamily. RsmH family.

The protein resides in the cytoplasm. The catalysed reaction is cytidine(1402) in 16S rRNA + S-adenosyl-L-methionine = N(4)-methylcytidine(1402) in 16S rRNA + S-adenosyl-L-homocysteine + H(+). Its function is as follows. Specifically methylates the N4 position of cytidine in position 1402 (C1402) of 16S rRNA. The polypeptide is Ribosomal RNA small subunit methyltransferase H (Shewanella baltica (strain OS223)).